The following is a 51-amino-acid chain: Large ribosomal subunit protein bL33 (51 aa).

A disordered region spans residues 1 to 21; sequence MRDKIKLESGAGTGHFYTTTK.

It belongs to the bacterial ribosomal protein bL33 family.

The protein is Large ribosomal subunit protein bL33 of Neisseria gonorrhoeae (strain ATCC 700825 / FA 1090).